A 173-amino-acid chain; its full sequence is ATP-dependent protease subunit HslV (173 aa).

The active site involves T2. Residues G158, D161, and T164 each coordinate Na(+).

The protein belongs to the peptidase T1B family. HslV subfamily. A double ring-shaped homohexamer of HslV is capped on each side by a ring-shaped HslU homohexamer. The assembly of the HslU/HslV complex is dependent on binding of ATP.

Its subcellular location is the cytoplasm. It catalyses the reaction ATP-dependent cleavage of peptide bonds with broad specificity.. With respect to regulation, allosterically activated by HslU binding. Functionally, protease subunit of a proteasome-like degradation complex believed to be a general protein degrading machinery. This is ATP-dependent protease subunit HslV from Mannheimia succiniciproducens (strain KCTC 0769BP / MBEL55E).